We begin with the raw amino-acid sequence, 198 residues long: Dual specificity protein phosphatase 14 (198 aa).

The 142-residue stretch at 26–167 (GIAQITSSLF…LIDYESQLFG (142 aa)) folds into the Tyrosine-protein phosphatase domain. Cysteine 111 (phosphocysteine intermediate) is an active-site residue.

It belongs to the protein-tyrosine phosphatase family. Non-receptor class dual specificity subfamily.

It catalyses the reaction O-phospho-L-tyrosyl-[protein] + H2O = L-tyrosyl-[protein] + phosphate. The catalysed reaction is O-phospho-L-seryl-[protein] + H2O = L-seryl-[protein] + phosphate. It carries out the reaction O-phospho-L-threonyl-[protein] + H2O = L-threonyl-[protein] + phosphate. Involved in the inactivation of MAP kinases. Dephosphorylates ERK, JNK and p38 MAP-kinases. Plays a negative role in TCR signaling by dephosphorylating MAP3K7 adapter TAB1 leading to its inactivation. In Mus musculus (Mouse), this protein is Dual specificity protein phosphatase 14 (Dusp14).